Reading from the N-terminus, the 127-residue chain is uncharacterized protein (127 aa).

The next 2 helical transmembrane spans lie at 48-68 and 83-103; these read LYSL…PLSI and VFLF…CLID.

The protein resides in the membrane. This is an uncharacterized protein from Saccharomyces cerevisiae (strain ATCC 204508 / S288c) (Baker's yeast).